Reading from the N-terminus, the 307-residue chain is Ornithine carbamoyltransferase (307 aa).

Residues 50–53 (STRT), Gln-77, Arg-101, and 128–131 (HPCQ) contribute to the carbamoyl phosphate site. L-ornithine is bound by residues Asn-160, Asp-224, and 228–229 (SM). Carbamoyl phosphate contacts are provided by residues 264–265 (CL) and Arg-292.

It belongs to the aspartate/ornithine carbamoyltransferase superfamily. OTCase family. Homotrimer.

The protein resides in the cytoplasm. It carries out the reaction carbamoyl phosphate + L-ornithine = L-citrulline + phosphate + H(+). It participates in amino-acid biosynthesis; L-arginine biosynthesis; L-arginine from L-ornithine and carbamoyl phosphate: step 1/3. Its function is as follows. Reversibly catalyzes the transfer of the carbamoyl group from carbamoyl phosphate (CP) to the N(epsilon) atom of ornithine (ORN) to produce L-citrulline, which is a substrate for argininosuccinate synthetase, the enzyme involved in the final step in arginine biosynthesis. The sequence is that of Ornithine carbamoyltransferase (argF) from Mycobacterium bovis (strain ATCC BAA-935 / AF2122/97).